A 199-amino-acid polypeptide reads, in one-letter code: Peroxiredoxin-1 (199 aa).

The residue at position 2 (Ser-2) is an N-acetylserine. Residues 6-165 (AKIGYPAPNF…IIRLVQAFQF (160 aa)) enclose the Thioredoxin domain. Lys-7 carries the post-translational modification N6-acetyllysine; alternate. Lys-7 is covalently cross-linked (Glycyl lysine isopeptide (Lys-Gly) (interchain with G-Cter in SUMO2); alternate). N6-acetyllysine occurs at positions 16 and 27. Position 32 is a phosphoserine (Ser-32). Lys-35 carries the post-translational modification N6-acetyllysine; alternate. Lys-35 is subject to N6-succinyllysine; alternate. The active-site Cysteine sulfenic acid (-SOH) intermediate is Cys-52. Thr-90 carries the phosphothreonine modification. Residue Lys-120 forms a Glycyl lysine isopeptide (Lys-Gly) (interchain with G-Cter in SUMO2) linkage. N6-acetyllysine is present on Lys-136. Lys-185 participates in a covalent cross-link: Glycyl lysine isopeptide (Lys-Gly) (interchain with G-Cter in SUMO1). Residue Lys-197 is modified to N6-acetyllysine.

The protein belongs to the peroxiredoxin family. AhpC/Prx1 subfamily. As to quaternary structure, homodimer; disulfide-linked, upon oxidation. 5 homodimers assemble to form a ring-like decamer. Interacts with GDPD5; forms a mixed-disulfide with GDPD5. Interacts with SESN1 and SESN2. Interacts with FAM107A. Phosphorylated on Thr-90 during the M-phase, which leads to a decrease in enzymatic activity. In terms of processing, acetylation increases reducing activity and resistance to superoxidation. Deacetylated by HDAC6 which decreases reducing activity. Found in various tissues; high concentration in liver.

The protein localises to the cytoplasm. It carries out the reaction a hydroperoxide + [thioredoxin]-dithiol = an alcohol + [thioredoxin]-disulfide + H2O. Thiol-specific peroxidase that catalyzes the reduction of hydrogen peroxide and organic hydroperoxides to water and alcohols, respectively. Plays a role in cell protection against oxidative stress by detoxifying peroxides and as sensor of hydrogen peroxide-mediated signaling events. Might participate in the signaling cascades of growth factors and tumor necrosis factor-alpha by regulating the intracellular concentrations of H(2)O(2). Reduces an intramolecular disulfide bond in GDPD5 that gates the ability to GDPD5 to drive postmitotic motor neuron differentiation. This Mus musculus (Mouse) protein is Peroxiredoxin-1 (Prdx1).